A 121-amino-acid chain; its full sequence is Putative iron-sulfur cluster insertion protein ErpA (121 aa).

Residues Cys49, Cys113, and Cys115 each contribute to the iron-sulfur cluster site.

This sequence belongs to the HesB/IscA family. As to quaternary structure, homodimer. Iron-sulfur cluster serves as cofactor.

Its function is as follows. Required for insertion of 4Fe-4S clusters. The protein is Putative iron-sulfur cluster insertion protein ErpA of Methylibium petroleiphilum (strain ATCC BAA-1232 / LMG 22953 / PM1).